Reading from the N-terminus, the 338-residue chain is Phosphonates-binding periplasmic protein (338 aa).

The first 26 residues, 1 to 26 (MNAKIIASLAFTSMFSLSTLLSPAHA), serve as a signal peptide directing secretion.

The protein belongs to the phosphate/phosphite/phosphonate binding protein family. In terms of assembly, the complex is composed of two ATP-binding proteins (PhnC), two transmembrane proteins (PhnE) and a solute-binding protein (PhnD).

The protein resides in the periplasm. Functionally, phosphonate binding protein that is part of the phosphonate uptake system. Exhibits high affinity for 2-aminoethylphosphonate, and somewhat less affinity to ethylphosphonate, methylphosphonate, phosphonoacetate and phenylphosphonate. The protein is Phosphonates-binding periplasmic protein (phnD) of Escherichia coli (strain K12).